We begin with the raw amino-acid sequence, 267 residues long: Phosphatidylglycerol--prolipoprotein diacylglyceryl transferase (267 aa).

The next 3 helical transmembrane spans lie at 21–41 (VSLH…YWLG), 60–80 (LLFN…VFFY), and 95–115 (IWEG…AMLW). Residue Arg-143 coordinates a 1,2-diacyl-sn-glycero-3-phospho-(1'-sn-glycerol). The next 2 membrane-spanning stretches (helical) occupy residues 203 to 223 (GSVA…VEYF) and 240 to 260 (GQLL…VAYY).

This sequence belongs to the Lgt family.

It is found in the cell inner membrane. It carries out the reaction L-cysteinyl-[prolipoprotein] + a 1,2-diacyl-sn-glycero-3-phospho-(1'-sn-glycerol) = an S-1,2-diacyl-sn-glyceryl-L-cysteinyl-[prolipoprotein] + sn-glycerol 1-phosphate + H(+). Its pathway is protein modification; lipoprotein biosynthesis (diacylglyceryl transfer). Its function is as follows. Catalyzes the transfer of the diacylglyceryl group from phosphatidylglycerol to the sulfhydryl group of the N-terminal cysteine of a prolipoprotein, the first step in the formation of mature lipoproteins. This is Phosphatidylglycerol--prolipoprotein diacylglyceryl transferase from Glaesserella parasuis serovar 5 (strain SH0165) (Haemophilus parasuis).